Here is a 569-residue protein sequence, read N- to C-terminus: 2-isopropylmalate synthase (569 aa).

One can recognise a Pyruvate carboxyltransferase domain in the interval 31–305; it reads PRWMSTDLRD…APELDFSDID (275 aa). The Mg(2+) site is built by aspartate 40, histidine 244, histidine 246, and asparagine 280. Positions 437–569 are regulatory domain; the sequence is RETPLRYVSH…TASASAATEA (133 aa).

This sequence belongs to the alpha-IPM synthase/homocitrate synthase family. LeuA type 2 subfamily. Homodimer. It depends on Mg(2+) as a cofactor.

It is found in the cytoplasm. The catalysed reaction is 3-methyl-2-oxobutanoate + acetyl-CoA + H2O = (2S)-2-isopropylmalate + CoA + H(+). Its pathway is amino-acid biosynthesis; L-leucine biosynthesis; L-leucine from 3-methyl-2-oxobutanoate: step 1/4. Catalyzes the condensation of the acetyl group of acetyl-CoA with 3-methyl-2-oxobutanoate (2-ketoisovalerate) to form 3-carboxy-3-hydroxy-4-methylpentanoate (2-isopropylmalate). In Cupriavidus taiwanensis (strain DSM 17343 / BCRC 17206 / CCUG 44338 / CIP 107171 / LMG 19424 / R1) (Ralstonia taiwanensis (strain LMG 19424)), this protein is 2-isopropylmalate synthase.